The chain runs to 319 residues: Acetyl-coenzyme A carboxylase carboxyl transferase subunit alpha (319 aa).

Residues 35–296 form the CoA carboxyltransferase C-terminal domain; that stretch reads NLDEEVQRLR…KAQLLADLND (262 aa).

This sequence belongs to the AccA family. In terms of assembly, acetyl-CoA carboxylase is a heterohexamer composed of biotin carboxyl carrier protein (AccB), biotin carboxylase (AccC) and two subunits each of ACCase subunit alpha (AccA) and ACCase subunit beta (AccD).

Its subcellular location is the cytoplasm. It catalyses the reaction N(6)-carboxybiotinyl-L-lysyl-[protein] + acetyl-CoA = N(6)-biotinyl-L-lysyl-[protein] + malonyl-CoA. It participates in lipid metabolism; malonyl-CoA biosynthesis; malonyl-CoA from acetyl-CoA: step 1/1. Component of the acetyl coenzyme A carboxylase (ACC) complex. First, biotin carboxylase catalyzes the carboxylation of biotin on its carrier protein (BCCP) and then the CO(2) group is transferred by the carboxyltransferase to acetyl-CoA to form malonyl-CoA. This Yersinia pseudotuberculosis serotype O:3 (strain YPIII) protein is Acetyl-coenzyme A carboxylase carboxyl transferase subunit alpha.